Here is a 432-residue protein sequence, read N- to C-terminus: Tyrosine-protein phosphatase non-receptor type 1 (432 aa).

An N-acetylmethionine modification is found at methionine 1. The Tyrosine-protein phosphatase domain maps to 3-277 (MEKEFEEIDK…RFSYLAVIEG (275 aa)). Tyrosine 20 is modified (phosphotyrosine). Serine 50 is modified (phosphoserine; by CLK1, CLK2 and PKB/AKT1 or PKB/AKT2). The residue at position 66 (tyrosine 66) is a Phosphotyrosine; by EGFR. Residues aspartate 181 and 215–221 (CSAGIGR) each bind substrate. The active-site Phosphocysteine intermediate is the cysteine 215. Cysteine persulfide is present on cysteine 215. Cysteine 215 is subject to S-nitrosocysteine; in reversibly inhibited form. Residues serine 242 and serine 243 each carry the phosphoserine; by CLK1 and CLK2 modification. Glutamine 262 is a binding site for substrate. 2 disordered regions span residues 297–322 (EDLDLPPEHVPPPPRPPKRTLEPHNG) and 335–399 (SEET…EEHK). Phosphoserine is present on residues serine 335, serine 362, and serine 364. The span at 354–364 (SSAMHSVSSMS) shows a compositional bias: low complexity. Threonine 367 carries the phosphothreonine modification.

It belongs to the protein-tyrosine phosphatase family. Non-receptor class 1 subfamily. As to quaternary structure, interacts with EPHA3 (phosphorylated); dephosphorylates EPHA3 and may regulate its trafficking and function. Interacts with MET. Interacts with NCK1. In terms of processing, ser-50 is the major site of phosphorylation as compared to Ser-242 and Ser-243. Activated by phosphorylation at Ser-50. S-nitrosylation of Cys-215 inactivates the enzyme activity. Post-translationally, sulfhydration at Cys-215 following endoplasmic reticulum stress inactivates the enzyme activity, promoting EIF2AK3/PERK activity. Most abundant in testis. Also found in kidney, spleen, muscle, liver, heart and brain.

It localises to the endoplasmic reticulum membrane. It catalyses the reaction O-phospho-L-tyrosyl-[protein] + H2O = L-tyrosyl-[protein] + phosphate. Functionally, tyrosine-protein phosphatase which acts as a regulator of endoplasmic reticulum unfolded protein response. Mediates dephosphorylation of EIF2AK3/PERK; inactivating the protein kinase activity of EIF2AK3/PERK. May play an important role in CKII- and p60c-src-induced signal transduction cascades. May regulate the EFNA5-EPHA3 signaling pathway which modulates cell reorganization and cell-cell repulsion. May also regulate the hepatocyte growth factor receptor signaling pathway through dephosphorylation of MET. The chain is Tyrosine-protein phosphatase non-receptor type 1 (Ptpn1) from Mus musculus (Mouse).